The primary structure comprises 744 residues: Tripartite motif-containing protein 2 (744 aa).

Position 10 is a phosphoserine (serine 10). The RING-type zinc finger occupies 23–64; it reads CSICLERYKNPKVLPCLHTFCERCLQNYIPAHSLTLSCPVCR. A B box-type zinc finger spans residues 113-154; that stretch reads GKPLSCPNHDGNVMEFYCQSCETAMCRECTEGEHAEHPTVPL. Zn(2+) is bound by residues cysteine 118, histidine 121, cysteine 141, and histidine 146. The Filamin repeat unit spans residues 320–421; that stretch reads TTNAVASETV…IRGSPFKLKV (102 aa). The residue at position 371 (threonine 371) is a Phosphothreonine. Phosphoserine is present on residues serine 375, serine 424, and serine 428. A disordered region spans residues 432–462; that stretch reads EGVKRRVKSPGSGHVKQKAVKRPASMYSTGK. NHL repeat units lie at residues 473–516, 520–563, 564–605, 609–652, 656–699, and 700–743; these read IFRV…FSND, KSRF…FSSD, GKFK…FQPN, VTRF…FNQE, MLKF…FDGS, and GSFL…YRYL.

Belongs to the TRIM/RBCC family. As to quaternary structure, forms homooligomers. Interacts with TRIM3; this interaction reduces TRIM2 activity. Interacts with myosin V; myosin V may not be a substrate for ubiquitination. Interacts with NEFL. Interacts with phosphorylated BCL2L11. Interacts with SIRPA. In terms of processing, RING-type zinc finger-dependent and UBE2D1-dependent autoubiquitination.

It is found in the cytoplasm. It carries out the reaction S-ubiquitinyl-[E2 ubiquitin-conjugating enzyme]-L-cysteine + [acceptor protein]-L-lysine = [E2 ubiquitin-conjugating enzyme]-L-cysteine + N(6)-ubiquitinyl-[acceptor protein]-L-lysine.. Its pathway is protein modification; protein ubiquitination. Functionally, UBE2D1-dependent E3 ubiquitin-protein ligase that mediates the ubiquitination of NEFL and of phosphorylated BCL2L11. Plays a neuroprotective function. May play a role in neuronal rapid ischemic tolerance. Plays a role in antiviral immunity and limits New World arenavirus infection independently of its ubiquitin ligase activity. The polypeptide is Tripartite motif-containing protein 2 (TRIM2) (Callithrix jacchus (White-tufted-ear marmoset)).